We begin with the raw amino-acid sequence, 167 residues long: U-scoloptoxin-Er5c (167 aa).

The N-terminal stretch at 1 to 22 (MKTNCEFPLLCLLIVLVANVEG) is a signal peptide. A propeptide spanning residues 23–94 (EVEDTGLKMV…KRLWRNWERR (72 aa)) is cleaved from the precursor. RLWRNWE repeat units follow at residues 34–40 (RLWRNWE), 61–67 (RLWRNWE), and 86–92 (RLWRNWE). Gln-95 is modified (pyrrolidone carboxylic acid). The stretch at 107 to 113 (ELWRNWE) is one RLWRNWE 4; approximate repeat. Residues 112–118 (WEDLKRR) constitute a propeptide that is removed on maturation. Gln-119 carries the post-translational modification Pyrrolidone carboxylic acid. An RLWRNWE 5 repeat occupies 134 to 140 (RLWRNWE). A propeptide spanning residues 139–167 (WEDNHATLRKRSADSLSRQKRLGRERGKE) is cleaved from the precursor. Residues 147–167 (RKRSADSLSRQKRLGRERGKE) are disordered.

Belongs to the scoloptoxin-08 family. In terms of tissue distribution, expressed by the venom gland.

The protein localises to the secreted. The sequence is that of U-scoloptoxin-Er5c from Ethmostigmus rubripes (Giant centipede).